We begin with the raw amino-acid sequence, 150 residues long: UPF0178 protein AZOSEA36080 (150 aa).

The protein belongs to the UPF0178 family.

The protein is UPF0178 protein AZOSEA36080 of Aromatoleum aromaticum (strain DSM 19018 / LMG 30748 / EbN1) (Azoarcus sp. (strain EbN1)).